A 244-amino-acid chain; its full sequence is Lipoprotein-releasing system ATP-binding protein LolD (244 aa).

Residues 19–244 enclose the ABC transporter domain; the sequence is IRAEALAKTY…KLRELAPSAV (226 aa). Residue 55–62 participates in ATP binding; that stretch reads GASGAGKS.

This sequence belongs to the ABC transporter superfamily. Lipoprotein translocase (TC 3.A.1.125) family. The complex is composed of two ATP-binding proteins (LolD) and two transmembrane proteins (LolC and LolE).

It localises to the cell inner membrane. Functionally, part of the ABC transporter complex LolCDE involved in the translocation of mature outer membrane-directed lipoproteins, from the inner membrane to the periplasmic chaperone, LolA. Responsible for the formation of the LolA-lipoprotein complex in an ATP-dependent manner. The chain is Lipoprotein-releasing system ATP-binding protein LolD from Xanthomonas axonopodis pv. citri (strain 306).